Here is a 905-residue protein sequence, read N- to C-terminus: MSQNGAVATNGVMLEELSSWPEEICRRELPSVLPRLLSMYQCSESWIEHIRILKIIVEMFLPHMNHLTLEETLFSQILPKTIQLFDGMICELTSEARELSSQNLEIQITIRNILQTMVQIIGSLTGCVHHVCATQESIILGNIHSLPSFILHIIKSTFVHCKNSESVYSGRLHLVSDLLQTLFKEAYSLQKQLMELLDMVCLGPSEDENSILTMVEVIHSLMDICSVISSMDKAFHANTWKFIIKQSLKHQSVIRSQLKHKEIISSLCEDILFSFHSCLQLAEQTTEPAAQDNADYRLFQKTLKLCRFFANSLLHYTKEFLPFLPDSCRTLHQLYLQIYSKFPPCLYTAKISKVQQEEIAGTFLVVLDPLLSQLLKSQSFVQTVLASKLDLPHELQLPQVLLLVVVVDKLPSQPEDVQTLWCTEDMTRMSILKAIFYNFGQFSGELSLPAHLQGVKGKGQAEVPVTLYQRICVHLCTFVASLHPTLFPELDAALLNAVLSTNMSTSLLAMDVWCFLARYGTAELGAHHVTLVAHLIKSCPGRCVQLTNLSVLLRRLFFFMAPAHQVEFIQKFSPREADNLHLWQYISFQALPADLRKQVTCEVTGVCTAQCRKWLSGSHTLAELDSLNTALSVLLTVCNSAGEALDSRQLTAVTEVVGQLWAFINVEQIISQPHVQQAFSLLLQLLAFFIQTVDLQLISQVVNVLTLVIKLEPPDHVSLAVLDFLSSLGKLYISQTLRDKVLPSLSCIVASLMVNRNWLLEQHTLEAFTQFAEGTKHEEIVSQCLGSEEIKNKVVSFLEKTESVGETEAATADNSGEQKTDTFWEPVAKVTLEEAKGSAFQPCTKRARQELLLEEEYRSAFQTATRALETTEALLKHSRAPAWLLSELGALQERIEKLKCCVLRG.

Phosphoserine is present on residues Ser-101 and Ser-796. Lys-845 carries the post-translational modification N6-acetyllysine.

Interacts (via its N-terminal region) with PLK1; controls PLK1 kinase activity. Interacts (via the KVVXF motif) with PPP1CC; controls PLK1 kinase activity. Interacts with FIGNL1; may regulate homologous recombination. In terms of processing, phosphorylation at Ser-101 by PLK1 strengthens FIRRM-PLK1 interaction. Phosphorylation at Ser-796 by PLK1 negatively regulates its interaction with PPP1CC.

It is found in the chromosome. The protein localises to the centromere. The protein resides in the kinetochore. It localises to the nucleus. Its subcellular location is the midbody. It is found in the cytoplasm. The protein localises to the cytoskeleton. The protein resides in the spindle. Functionally, regulates PLK1 kinase activity at kinetochores and promotes faithful chromosome segregation in prometaphase by bridging kinase and phosphatase activities. Phosphorylation of FIRRM by PLK1 negatively regulates its interaction with the phosphatase, PPP1CC, thus creating a negative feedback loop for maintaining proper PLK1 kinase activity during mitosis. In complex with FIGL1 may regulate homologous recombination. In Rattus norvegicus (Rat), this protein is FIGNL1-interacting regulator of recombination and mitosis.